The following is a 439-amino-acid chain: Chromosomal replication initiator protein DnaA (439 aa).

Positions 1–75 (MESWSRCLER…GIREVVLAIG (75 aa)) are domain I, interacts with DnaA modulators. Positions 75-101 (GSRPKTTELPVPVDTTGRLSSTVPFNG) are domain II. Positions 102 to 319 (NLDTHYNFDN…GALNTLVARA (218 aa)) are domain III, AAA+ region. Residues Gly147, Gly149, Lys150, and Thr151 each coordinate ATP. Residues 320–439 (NFTGRAVTIE…WDKLMRKFSE (120 aa)) are domain IV, binds dsDNA.

The protein belongs to the DnaA family. In terms of assembly, oligomerizes as a right-handed, spiral filament on DNA at oriC.

It is found in the cytoplasm. Plays an essential role in the initiation and regulation of chromosomal replication. ATP-DnaA binds to the origin of replication (oriC) to initiate formation of the DNA replication initiation complex once per cell cycle. Binds the DnaA box (a 9 base pair repeat at the origin) and separates the double-stranded (ds)DNA. Forms a right-handed helical filament on oriC DNA; dsDNA binds to the exterior of the filament while single-stranded (ss)DNA is stabiized in the filament's interior. The ATP-DnaA-oriC complex binds and stabilizes one strand of the AT-rich DNA unwinding element (DUE), permitting loading of DNA polymerase. After initiation quickly degrades to an ADP-DnaA complex that is not apt for DNA replication. Binds acidic phospholipids. In Xylella fastidiosa (strain 9a5c), this protein is Chromosomal replication initiator protein DnaA.